The sequence spans 144 residues: Phospholipase A2 (144 aa).

The N-terminal stretch at 1–15 (MKFLVLAALLTAGTA) is a signal peptide. Positions 16–22 (ASGVSPT) are cleaved as a propeptide — activation peptide. Disulfide bonds link Cys-33–Cys-99, Cys-49–Cys-144, Cys-51–Cys-67, Cys-66–Cys-127, Cys-73–Cys-120, Cys-83–Cys-113, and Cys-106–Cys-118. Tyr-50, Gly-52, and Gly-54 together coordinate Ca(2+). Residue His-70 is part of the active site. Asp-71 contributes to the Ca(2+) binding site. Asp-121 is a catalytic residue.

Belongs to the phospholipase A2 family. In terms of assembly, monomer or homodimer. Ca(2+) is required as a cofactor. Post-translationally, activated by trypsin cleavage in the duodenum. Can also be activated by thrombin or autocatalytically.

Its subcellular location is the secreted. It carries out the reaction a 1,2-diacyl-sn-glycero-3-phosphocholine + H2O = a 1-acyl-sn-glycero-3-phosphocholine + a fatty acid + H(+). The catalysed reaction is 1,2-ditetradecanoyl-sn-glycero-3-phosphocholine + H2O = 1-tetradecanoyl-sn-glycero-3-phosphocholine + tetradecanoate + H(+). It catalyses the reaction 1,2-dihexadecanoyl-sn-glycero-3-phosphocholine + H2O = 1-hexadecanoyl-sn-glycero-3-phosphocholine + hexadecanoate + H(+). The enzyme catalyses 1-hexadecanoyl-2-(9Z-octadecenoyl)-sn-glycero-3-phosphocholine + H2O = 1-hexadecanoyl-sn-glycero-3-phosphocholine + (9Z)-octadecenoate + H(+). It carries out the reaction 1-hexadecanoyl-2-(5Z,8Z,11Z,14Z-eicosatetraenoyl)-sn-glycero-3-phosphocholine + H2O = 1-hexadecanoyl-sn-glycero-3-phosphocholine + (5Z,8Z,11Z,14Z)-eicosatetraenoate + H(+). The catalysed reaction is 1-hexadecanoyl-2-(9Z-octadecenoyl)-sn-glycero-3-phospho-(1'-sn-glycerol) + H2O = 1-hexadecanoyl-sn-glycero-3-phospho-(1'-sn-glycerol) + (9Z)-octadecenoate + H(+). It catalyses the reaction N-hexadecanoyl-1,2-di-(9Z-octadecenoyl)-sn-glycero-3-phosphoethanolamine + H2O = N-hexadecanoyl-1-(9Z-octadecenoyl)-sn-glycero-3-phosphoethanolamine + (9Z)-octadecenoate + H(+). The enzyme catalyses 1-hexadecanoyl-2-(9Z,12Z-octadecadienoyl)-sn-glycero-3-phosphoethanolamine + H2O = 1-hexadecanoyl-sn-glycero-3-phosphoethanolamine + (9Z,12Z)-octadecadienoate + H(+). It carries out the reaction N,1-dihexadecanoyl-2-(9Z,12Z-octadecadienoyl)-sn-glycero-3-phosphoethanolamine + H2O = N,1-dihexadecanoyl-sn-glycero-3-phosphoethanolamine + (9Z,12Z)-octadecadienoate + H(+). Secretory calcium-dependent phospholipase A2 that primarily targets dietary phospholipids in the intestinal tract. Hydrolyzes the ester bond of the fatty acyl group attached at sn-2 position of phospholipids (phospholipase A2 activity) with preference for phosphatidylethanolamines and phosphatidylglycerols over phosphatidylcholines. May play a role in the biosynthesis of N-acyl ethanolamines that regulate energy metabolism and inflammation in the intestinal tract. Hydrolyzes N-acyl phosphatidylethanolamines to N-acyl lysophosphatidylethanolamines, which are further cleaved by a lysophospholipase D to release N-acyl ethanolamines. May act in an autocrine and paracrine manner. Has anti-helminth activity in a process regulated by gut microbiota. Upon helminth infection of intestinal epithelia, directly affects phosphatidylethanolamine contents in the membrane of helminth larvae, likely controlling an array of phospholipid-mediated cellular processes such as membrane fusion and cell division while providing for better immune recognition, ultimately reducing larvae integrity and infectivity. The chain is Phospholipase A2 (PLA2G1B) from Oryctolagus cuniculus (Rabbit).